The primary structure comprises 144 residues: tRNA-specific adenosine deaminase (144 aa).

The CMP/dCMP-type deaminase domain occupies 1-116; that stretch reads MEQALKQAGI…SNLRYFNSSV (116 aa). Position 48 (His-48) interacts with Zn(2+). The active-site Proton donor is Glu-50. The Zn(2+) site is built by Cys-78 and Cys-81.

Belongs to the cytidine and deoxycytidylate deaminase family. As to quaternary structure, homodimer. Requires Zn(2+) as cofactor.

The enzyme catalyses adenosine(34) in tRNA + H2O + H(+) = inosine(34) in tRNA + NH4(+). Functionally, catalyzes the deamination of adenosine to inosine at the wobble position 34 of tRNA(Arg2). This Rickettsia felis (strain ATCC VR-1525 / URRWXCal2) (Rickettsia azadi) protein is tRNA-specific adenosine deaminase.